A 157-amino-acid polypeptide reads, in one-letter code: Endoribonuclease YbeY (157 aa).

Zn(2+) is bound by residues His-122, His-126, and His-132.

It belongs to the endoribonuclease YbeY family. It depends on Zn(2+) as a cofactor.

It is found in the cytoplasm. Its function is as follows. Single strand-specific metallo-endoribonuclease involved in late-stage 70S ribosome quality control and in maturation of the 3' terminus of the 16S rRNA. In Bacillus velezensis (strain DSM 23117 / BGSC 10A6 / LMG 26770 / FZB42) (Bacillus amyloliquefaciens subsp. plantarum), this protein is Endoribonuclease YbeY.